Reading from the N-terminus, the 161-residue chain is ATP synthase subunit b (161 aa).

A helical transmembrane segment spans residues 1–21 (MYLNATILGQVIAFILFVWFC).

Belongs to the ATPase B chain family. As to quaternary structure, F-type ATPases have 2 components, F(1) - the catalytic core - and F(0) - the membrane proton channel. F(1) has five subunits: alpha(3), beta(3), gamma(1), delta(1), epsilon(1). F(0) has three main subunits: a(1), b(2) and c(10-14). The alpha and beta chains form an alternating ring which encloses part of the gamma chain. F(1) is attached to F(0) by a central stalk formed by the gamma and epsilon chains, while a peripheral stalk is formed by the delta and b chains.

Its subcellular location is the cell inner membrane. Functionally, f(1)F(0) ATP synthase produces ATP from ADP in the presence of a proton or sodium gradient. F-type ATPases consist of two structural domains, F(1) containing the extramembraneous catalytic core and F(0) containing the membrane proton channel, linked together by a central stalk and a peripheral stalk. During catalysis, ATP synthesis in the catalytic domain of F(1) is coupled via a rotary mechanism of the central stalk subunits to proton translocation. Its function is as follows. Component of the F(0) channel, it forms part of the peripheral stalk, linking F(1) to F(0). The chain is ATP synthase subunit b from Blochmanniella floridana.